Consider the following 590-residue polypeptide: Acetylcholinesterase (590 aa).

The signal sequence occupies residues 1 to 24 (MREMNLLVTSSLGVLLHLVVLCQA). The N-linked (GlcNAc...) asparagine glycan is linked to Asn83. The cysteines at positions 91 and 118 are disulfide-linked. Ser224 functions as the Acyl-ester intermediate in the catalytic mechanism. Cys278 and Cys289 are disulfide-bonded. The active-site Charge relay system is the Glu351. A disulfide bond links Cys426 and Cys545. Asn440 carries N-linked (GlcNAc...) asparagine glycosylation. The Charge relay system role is filled by His464. 2 N-linked (GlcNAc...) asparagine glycosylation sites follow: Asn481 and Asn557. Residue Ser567 is the site of GPI-anchor amidated serine attachment. A propeptide spans 568-590 (SGTSSSKGIIFYVLFSILYLIFY) (removed in mature form).

It belongs to the type-B carboxylesterase/lipase family. Isoform H form is a homodimer; the asymmetric form is a disulfide-bonded oligomer composed of a collagenic subunit (Q) and a variable number of T catalytic subunits. An interchain disulfide bond is present in what becomes position 596 of the T isoform. In terms of tissue distribution, found in the synapses and to a lower extent in extrajunctional areas of muscle and nerve, and on erythrocyte membranes.

It is found in the cell membrane. The protein localises to the synapse. It catalyses the reaction acetylcholine + H2O = choline + acetate + H(+). Functionally, terminates signal transduction at the neuromuscular junction by rapid hydrolysis of the acetylcholine released into the synaptic cleft. May be involved in cell-cell interactions. The protein is Acetylcholinesterase (ache) of Torpedo marmorata (Marbled electric ray).